A 66-amino-acid polypeptide reads, in one-letter code: Large ribosomal subunit protein bL33c (66 aa).

This sequence belongs to the bacterial ribosomal protein bL33 family.

It localises to the plastid. This is Large ribosomal subunit protein bL33c from Cuscuta gronovii (Common dodder).